An 88-amino-acid polypeptide reads, in one-letter code: Thioredoxin-2 (88 aa).

In terms of domain architecture, Thioredoxin spans 2 to 88 (SRVIHISSNE…YRNGAKVSEF (87 aa)). Catalysis depends on nucleophile residues Cys-31 and Cys-34. A disulfide bond links Cys-31 and Cys-34.

The protein belongs to the thioredoxin family.

In terms of biological role, participates in various redox reactions through the reversible oxidation of its active center dithiol to a disulfide and catalyzes dithiol-disulfide exchange reactions. The polypeptide is Thioredoxin-2 (trxB) (Dictyostelium discoideum (Social amoeba)).